Consider the following 212-residue polypeptide: Thymidylate kinase (212 aa).

11-18 (GPDGAGKT) provides a ligand contact to ATP.

This sequence belongs to the thymidylate kinase family.

It catalyses the reaction dTMP + ATP = dTDP + ADP. Functionally, phosphorylation of dTMP to form dTDP in both de novo and salvage pathways of dTTP synthesis. The protein is Thymidylate kinase of Streptococcus mutans serotype c (strain ATCC 700610 / UA159).